The chain runs to 273 residues: Shikimate dehydrogenase (NADP(+)) (273 aa).

Residues 14 to 16 and Thr61 contribute to the shikimate site; that span reads SKS. The active-site Proton acceptor is Lys65. Glu77 contributes to the NADP(+) binding site. Positions 86 and 102 each coordinate shikimate. NADP(+) contacts are provided by residues 126–130, 150–155, and Met213; these read GAGGA and NRTYEK. Tyr215 serves as a coordination point for shikimate. Position 237 (Gly237) interacts with NADP(+).

The protein belongs to the shikimate dehydrogenase family. As to quaternary structure, homodimer.

It carries out the reaction shikimate + NADP(+) = 3-dehydroshikimate + NADPH + H(+). The protein operates within metabolic intermediate biosynthesis; chorismate biosynthesis; chorismate from D-erythrose 4-phosphate and phosphoenolpyruvate: step 4/7. Functionally, involved in the biosynthesis of the chorismate, which leads to the biosynthesis of aromatic amino acids. Catalyzes the reversible NADPH linked reduction of 3-dehydroshikimate (DHSA) to yield shikimate (SA). The protein is Shikimate dehydrogenase (NADP(+)) of Aliivibrio fischeri (strain MJ11) (Vibrio fischeri).